The sequence spans 141 residues: Hemoglobin subunit alpha-2 (141 aa).

Residues 1-141 (VLTEDDKNHV…VCKDLVSKYR (141 aa)) form the Globin domain. His58 lines the O2 pocket. A heme b-binding site is contributed by His87.

This sequence belongs to the globin family. As to quaternary structure, the major hemoglobin component (HbIII) is a heterotetramer of two alpha-2 chains and two beta-1 chains. In terms of tissue distribution, red blood cells.

Functionally, involved in oxygen transport from the lung to the various peripheral tissues. This Varanus albigularis (White-throated monitor) protein is Hemoglobin subunit alpha-2.